The following is a 456-amino-acid chain: ATP synthase subunit beta 1 (456 aa).

152–159 (GGAGVGKS) is a binding site for ATP.

It belongs to the ATPase alpha/beta chains family. As to quaternary structure, F-type ATPases have 2 components, CF(1) - the catalytic core - and CF(0) - the membrane proton channel. CF(1) has five subunits: alpha(3), beta(3), gamma(1), delta(1), epsilon(1). CF(0) has three main subunits: a(1), b(2) and c(9-12). The alpha and beta chains form an alternating ring which encloses part of the gamma chain. CF(1) is attached to CF(0) by a central stalk formed by the gamma and epsilon chains, while a peripheral stalk is formed by the delta and b chains.

Its subcellular location is the cell membrane. The enzyme catalyses ATP + H2O + 4 H(+)(in) = ADP + phosphate + 5 H(+)(out). Its function is as follows. Produces ATP from ADP in the presence of a proton gradient across the membrane. The catalytic sites are hosted primarily by the beta subunits. This is ATP synthase subunit beta 1 from Listeria welshimeri serovar 6b (strain ATCC 35897 / DSM 20650 / CCUG 15529 / CIP 8149 / NCTC 11857 / SLCC 5334 / V8).